The sequence spans 617 residues: uncharacterized protein (617 aa).

Low complexity-rich tracts occupy residues 1-16 (MSKC…SNSS) and 36-45 (STTSSNGSNS). Residues 1–49 (MSKCATPTPSTSSNSSDEAKRSPQPMSRGFPQRNMSTTSSNGSNSPRHR) are disordered. Transmembrane regions (helical) follow at residues 219 to 239 (LMIG…GGLA), 262 to 282 (TAGA…FTGY), and 427 to 447 (PITL…LLTM).

The protein belongs to the TMCO4 family.

It is found in the membrane. This is an uncharacterized protein from Caenorhabditis elegans.